We begin with the raw amino-acid sequence, 1065 residues long: MGEIEGTYRALPTSGTRLGGQTAIGVSTLEPEQSLSPRMQEKHMRIRVKLLDSTVELFDIEPKCDGQVLLTQVWKHLNLIECDYFGLEFKNVQSYWIWLEPMKPIIRQVRKPKNAVLRLAVKFFPPDPGQLQEEYTRYLFALQLKRDLLEERLTCTANTAALLISHLLQSEIGDYDETLDREHLKANEYLPNQEKSLEKILDFHQRHTGQTPAESDFQVLEIARKLEMYGIRFHMASDREGTKINLAVSHMGVLVFQGTTKINTFNWSKVRKLSFKRKRFLIKLHPEVHGPYQDTLEFLLGSRDECKNFWKICVEYHTFFRLSDQPKPKAKAVFFSRGSSFRYSGRTQKQLVDYVKDGGMKRIPYERRHSKTRTSLHALTVDLPKQSVSFTDGLRTSASLSSANVSFYPPPSSSLSPPGLPNLKDSSSSLVDPQAPVIKSTAAERSSGPSSSDGPSTQSAHLPGPPVLRPGPGFSMDSPQPSPSSLKSHLSLCPELQAALSTAEQGASPVLSPVLSGAGTARMDNQEEQKHKHMPEDEAYFIAKEILATERTYLKDLEVITVWFRSVLIKEEAMPAALMALLFSNIDPVYEFHRGFLHEVEQRLALWEGPSSAHLKGDHQRIGDILLRNMRQLKEFTSYFQRHDEVLTELEKATKHCKKLEAVYKEFELQKVCYLPLNTFLLKPVQRLVHYRLLLSRLCAHYSPGHRDYADCHEALKAITEVTTELQQSLTRLENLQKLTELQRDLVGVENLIAPGREFIREGCLHKLTKKGLQQRMFFLFSDMLLYTSKSVTGASHFRIRGFLPLRGMLVEESENEWSVPHCFTIYAAQKTIVVAASTRLEKEKWMQDLNAAIQAAKTIGDSPPVLLGGPVYTRTPRSSDEVSLEESEDGRGNRGSLEGNSQHRANTTMHVCWYRNTSVSRADHSAAVENQLSGYLLRKFKNSNGWQKLWVVFTNFCLFFYKTHQDDYPLASLPLLGYSVSLPREADSIHKDYVFKLQFKSHVYFFRAESKYTFERWMDVIKRASSSPGRPPSFTQDCSHHSPGLEAEIREKEACPSPCLDKNL.

Positions Met-44–Asp-324 constitute an FERM domain. A phosphoserine mark is found at Ser-389 and Ser-440. Disordered regions lie at residues Ser-406–His-489 and Glu-504–Met-534. Low complexity predominate over residues Ser-440–Ser-459. Residues Asp-524–Met-534 are compositionally biased toward basic and acidic residues. Residues Glu-538 to Ser-729 form the DH domain. The region spanning Glu-758–Gln-855 is the PH 1 domain. A phosphoserine mark is found at Ser-863 and Ser-880. A disordered region spans residues Thr-874–Ser-902. A PH 2 domain is found at Glu-930–Ser-1027.

Interacts with PLXNA1. Interaction with PLXNA1 or PIP5K1C lowers its guanine nucleotide exchange activity. Dissociates from PLXNA1 when SEMA3A binds to the receptor. Interacts with PIP5K1C via its FERM domain. The interaction with PIP5K1C is enhanced by SEMA3A binding. Interacts with RAC1. In terms of tissue distribution, detected in adult brain, lung and testis. Detected in embryonic hippocampus and brain cortex.

In terms of biological role, functions as a guanine nucleotide exchange factor that activates RAC1. May have relatively low activity. Plays a role in the response to class 3 semaphorins and remodeling of the actin cytoskeleton. Plays a role in TNFSF11-mediated osteoclast differentiation, especially in podosome rearrangement and reorganization of the actin cytoskeleton. Regulates the activation of ITGB3, integrin signaling and cell adhesion. The protein is FERM, ARHGEF and pleckstrin domain-containing protein 2 (Farp2) of Mus musculus (Mouse).